The primary structure comprises 450 residues: Exodeoxyribonuclease 7 large subunit (450 aa).

The protein belongs to the XseA family. Heterooligomer composed of large and small subunits.

The protein localises to the cytoplasm. The catalysed reaction is Exonucleolytic cleavage in either 5'- to 3'- or 3'- to 5'-direction to yield nucleoside 5'-phosphates.. Functionally, bidirectionally degrades single-stranded DNA into large acid-insoluble oligonucleotides, which are then degraded further into small acid-soluble oligonucleotides. The protein is Exodeoxyribonuclease 7 large subunit of Rickettsia felis (strain ATCC VR-1525 / URRWXCal2) (Rickettsia azadi).